The chain runs to 696 residues: Ribonucleoside-diphosphate reductase subunit beta (696 aa).

The Fe cation site is built by aspartate 97, glutamate 127, and histidine 130. Residue tyrosine 134 is part of the active site. Fe cation contacts are provided by glutamate 194 and glutamate 228. Positions 377-507 constitute a DOD-type homing endonuclease domain; that stretch reads DGTIDSKRNG…FVQALCALGG (131 aa). Histidine 577 contributes to the Fe cation binding site.

The protein belongs to the ribonucleoside diphosphate reductase small chain family. In terms of assembly, tetramer of two alpha and two beta subunits. Fe cation serves as cofactor. This protein undergoes a protein self splicing that involves a post-translational excision of the intervening region (intein) followed by peptide ligation.

It catalyses the reaction a 2'-deoxyribonucleoside 5'-diphosphate + [thioredoxin]-disulfide + H2O = a ribonucleoside 5'-diphosphate + [thioredoxin]-dithiol. In terms of biological role, provides the precursors necessary for DNA synthesis. Catalyzes the biosynthesis of deoxyribonucleotides from the corresponding ribonucleotides. The sequence is that of Ribonucleoside-diphosphate reductase subunit beta (nrdB) from Aquifex aeolicus (strain VF5).